A 1124-amino-acid polypeptide reads, in one-letter code: Phytochrome type A (1124 aa).

The segment covering 1 to 19 has biased composition (low complexity); the sequence is MSTTRPSQSSNNSGRSRNS. The segment at 1 to 21 is disordered; it reads MSTTRPSQSSNNSGRSRNSAR. One can recognise a GAF domain in the interval 218-401; it reads SMERLCDTMV…VFAIHVNKEI (184 aa). A phytochromobilin-binding site is contributed by Cys323. PAS domains follow at residues 617-687 and 750-821; these read VTSE…LQGE and DYKA…VNFG. The region spanning 901–1120 is the Histidine kinase domain; the sequence is YMKRQIRNPL…ILSVELAAAH (220 aa).

It belongs to the phytochrome family. Homodimer. Contains one covalently linked phytochromobilin chromophore.

Its function is as follows. Regulatory photoreceptor which exists in two forms that are reversibly interconvertible by light: the Pr form that absorbs maximally in the red region of the spectrum and the Pfr form that absorbs maximally in the far-red region. Photoconversion of Pr to Pfr induces an array of morphogenic responses, whereas reconversion of Pfr to Pr cancels the induction of those responses. Pfr controls the expression of a number of nuclear genes including those encoding the small subunit of ribulose-bisphosphate carboxylase, chlorophyll A/B binding protein, protochlorophyllide reductase, rRNA, etc. It also controls the expression of its own gene(s) in a negative feedback fashion. In Lathyrus sativus (White vetchling), this protein is Phytochrome type A (PHYA).